The primary structure comprises 351 residues: Signal recognition particle receptor FtsY (351 aa).

Residues 152 to 159 (GVNGSGKT), 235 to 239 (DTAGR), and 299 to 302 (TKMD) each bind GTP.

This sequence belongs to the GTP-binding SRP family. FtsY subfamily. Part of the signal recognition particle protein translocation system, which is composed of SRP and FtsY.

The protein resides in the cell membrane. It localises to the cytoplasm. It carries out the reaction GTP + H2O = GDP + phosphate + H(+). Its function is as follows. Involved in targeting and insertion of nascent membrane proteins into the cytoplasmic membrane. Acts as a receptor for the complex formed by the signal recognition particle (SRP) and the ribosome-nascent chain (RNC). The sequence is that of Signal recognition particle receptor FtsY from Metamycoplasma hominis (strain ATCC 23114 / DSM 25592 / NBRC 14850 / NCTC 10111 / PG21) (Mycoplasma hominis).